The chain runs to 544 residues: E3 ubiquitin-protein ligase makorin-3 (544 aa).

2 disordered regions span residues 1-46 (MEES…VSSA) and 117-144 (DLSGRRRSRGGQDAQPRASADRGPKMAT). Composition is skewed to low complexity over residues 9-19 (EAHAAAGAEAG) and 36-46 (AAGASAGVSSA). 2 C3H1-type zinc fingers span residues 92-119 (WTKQILCRYYLHGQCKEGDNCRYSHDLS) and 274-301 (PMPLPLCRYAARGQCLRGDRCAYPHGEI). The interval 302–329 (CDMCGQQALHPWDAAQQEAHRRACVEAH) is makorin-type Cys-His. An RING-type zinc finger spans residues 347–401 (CGICMEVVYEKADPSDRRFGILFSCNHTYCLRCIRRWRSATQFENRISKSCPQCR). The C3H1-type 3 zinc finger occupies 430 to 459 (GMSQKACRYFAGGLGHCPFGEFCFYKHEYP).

Mainly expressed in mouse brain and reproductive system including testis and ovary. Ubiquitously detected at low levels throughout the entire embryo, but expression is highest in the ventricular layers of the brain.

It is found in the nucleus. The catalysed reaction is S-ubiquitinyl-[E2 ubiquitin-conjugating enzyme]-L-cysteine + [acceptor protein]-L-lysine = [E2 ubiquitin-conjugating enzyme]-L-cysteine + N(6)-ubiquitinyl-[acceptor protein]-L-lysine.. The protein operates within protein modification; protein ubiquitination. Functionally, E3 ubiquitin ligase catalyzing the covalent attachment of ubiquitin moieties onto substrate proteins. Acts as a key developmental timer that helps ensure puberty begins at the appropriate age, by inhibiting premature activation of the reproductive hormone cascade. Epigenetically regulates GNRH1 transcription by disrupting the binding of methyl-DNA binding protein 3/MBD3 to the promoter of GNRH1. Mechanistically, mediates the non-proteolytic ubiquitination of MBD3 at multiple sites with 'Lys27' ubiquitin linkages and thereby regulates the methylation status of the genome, including GNRH1 promoter. Modulates the stability and translation of GNRH1 mRNA by mediating the non-proteolytic ubiquitination of PABP family members PABPC1, PABPC3 and PABPC4 at multiple sites. Also participates in the maintenance of genomic and epigenomic stability by regulating the abundance of APEX2 via 'Lys-48'-linked ubiquitination. This is E3 ubiquitin-protein ligase makorin-3 (Mkrn3) from Mus musculus (Mouse).